The chain runs to 118 residues: Large ribosomal subunit protein bL20 (118 aa).

The protein belongs to the bacterial ribosomal protein bL20 family.

Its function is as follows. Binds directly to 23S ribosomal RNA and is necessary for the in vitro assembly process of the 50S ribosomal subunit. It is not involved in the protein synthesizing functions of that subunit. This chain is Large ribosomal subunit protein bL20, found in Ralstonia pickettii (strain 12J).